A 1612-amino-acid polypeptide reads, in one-letter code: Phospholipid-transporting ATPase DNF2 (1612 aa).

Residues 1–74 (MSSPSKPTSP…MKDISTPDLS (74 aa)) are disordered. The Cytoplasmic portion of the chain corresponds to 1 to 252 (MSSPSKPTSP…TFFPKNILFQ (252 aa)). Residues 20-30 (GSASNGLSSMS) are compositionally biased toward low complexity. T70 is subject to Phosphothreonine. S85 bears the Phosphoserine mark. A helical membrane pass occupies residues 253–273 (FHNFANIYFLILLILGAFQIF). An involved in phosphatidylcholine substrate selection region spans residues 272 to 279 (IFGVTNPG). The Extracellular segment spans residues 274 to 277 (GVTN). Residues 278–298 (PGFASVPLIVIVIITAIKDGI) form a helical membrane-spanning segment. Over 299-598 (EDSRRTVLDL…RISRELNFSV (300 aa)) the chain is Cytoplasmic. A compositionally biased stretch (basic and acidic residues) spans 364 to 373 (KLQKKREELR). The segment at 364–384 (KLQKKREELRRKRNSRSFGPR) is disordered. 4 positions are modified to phosphoserine: S389, S392, S396, and S403. Y406 bears the Phosphotyrosine mark. The helical transmembrane segment at 599–619 (ILNFVLLFILCFTAGIVNGVY) threads the bilayer. The Extracellular portion of the chain corresponds to 620-639 (YKQKPRSRDYFEFGTIGGSA). Residues 631-635 (EFGTI) form an involved in phosphatidylcholine substrate selection region. The helical transmembrane segment at 640–660 (STNGFVSFWVAVILYQSLVPI) threads the bilayer. The Cytoplasmic segment spans residues 661-1231 (SLYISVEIIK…WCYKRLAEMI (571 aa)). D712 (4-aspartylphosphate intermediate) is an active-site residue. Residues D712, K713, and T714 each contribute to the ATP site. D712 lines the Mg(2+) pocket. Residue T714 coordinates Mg(2+). Phosphothreonine is present on T782. ATP contacts are provided by E846, F887, S889, K892, and K916. K938 participates in a covalent cross-link: Glycyl lysine isopeptide (Lys-Gly) (interchain with G-Cter in ubiquitin). Positions 952, 953, 1032, 1033, 1034, 1147, and 1153 each coordinate ATP. Mg(2+) is bound at residue D1173. The ATP site is built by N1176 and D1177. Residue D1177 participates in Mg(2+) binding. The chain crosses the membrane as a helical span at residues 1232 to 1252 (PQFFYKNVIFTLSLFWYGIYN). Residues 1253 to 1262 (NFDGSYLFEY) are Extracellular-facing. Residues 1263 to 1283 (TYLTFYNLAFTSVPVILLAVL) form a helical membrane-spanning segment. Topologically, residues 1284–1313 (DQDVSDTVSMLVPQLYRVGILRKEWNQTKF) are cytoplasmic. A helical membrane pass occupies residues 1314–1334 (LWYMLDGVYQSVICFFFPYLA). Residues 1335-1350 (YHKNMVVTENGLGLDH) are Extracellular-facing. Residues 1351 to 1371 (RYFVGVFVTAIAVTSCNFYVF) form a helical membrane-spanning segment. The Cytoplasmic segment spans residues 1372–1377 (MEQYRW). The helical transmembrane segment at 1378-1398 (DWFCGLFICLSLAVFYGWTGI) threads the bilayer. Topologically, residues 1399-1418 (WTSSSSSNEFYKGAARVFAQ) are extracellular. The chain crosses the membrane as a helical span at residues 1419–1439 (PAYWAVLFVGVLFCLLPRFTI). R1436 lines the a 1,2-diacyl-sn-glycero-3-phospho-L-serine pocket. The Cytoplasmic segment spans residues 1440–1612 (DCIRKIFYPK…TLLSQRSRDR (173 aa)). S1542 carries the post-translational modification Phosphoserine. The disordered stretch occupies residues 1544 to 1563 (VTTTNNLPRRSMASARGNKL). S1592 is modified (phosphoserine).

It belongs to the cation transport ATPase (P-type) (TC 3.A.3) family. Type IV subfamily. As to quaternary structure, component of a flippase complex consisting of DNF1 and LEM3. Interacts with LEM3; the interaction is direct. The cofactor is Mg(2+). Phosphorylated by FPK1 and KIN82.

It is found in the cell membrane. The enzyme catalyses ATP + H2O + phospholipidSide 1 = ADP + phosphate + phospholipidSide 2.. The catalysed reaction is a 1,2-diacyl-sn-glycero-3-phosphoethanolamine(out) + ATP + H2O = a 1,2-diacyl-sn-glycero-3-phosphoethanolamine(in) + ADP + phosphate + H(+). It carries out the reaction a 1,2-diacyl-sn-glycero-3-phosphocholine(out) + ATP + H2O = a 1,2-diacyl-sn-glycero-3-phosphocholine(in) + ADP + phosphate + H(+). It catalyses the reaction a beta-D-glucosyl-(1&lt;-&gt;1')-N-acylsphing-4-enine(out) + ATP + H2O = a beta-D-glucosyl-(1&lt;-&gt;1')-N-acylsphing-4-enine(in) + ADP + phosphate + H(+). The enzyme catalyses a 1,2-diacyl-sn-glycero-3-phospho-L-serine(out) + ATP + H2O = a 1,2-diacyl-sn-glycero-3-phospho-L-serine(in) + ADP + phosphate + H(+). Phosphatidylcholine flippase activity is inhibited by glucosylsphingosine, lactosylsphingosine, lysophosphatidylcholine and to a lesser degree sphingosine-1-phosphate and lysosphingomyelin. Glucosylceramide flippase activity is inhibited by lysophosphatidylcholine, glucosylsphingosine and to a lesser degree lactosylsphingosine whereas lysosphingomyelin has a stimulatory effect at low concentrations. In terms of biological role, catalytic component of a P4-ATPase flippase complex which catalyzes the hydrolysis of ATP coupled to the transport of glucosylceramide, phosphatidylcholine, phosphatidylethanolamine, and small amounts of phosphatidylserine from the lumenal to the cytosolic leaflet of the cell membrane and ensures the maintenance of asymmetric distribution of phospholipids. Does not appear to transport sphingomyelin, inositol phosphoceramide or phosphatidic acid. Required for efficient endocytosis. Required for protein transport from Golgi to vacuoles. The sequence is that of Phospholipid-transporting ATPase DNF2 (DNF2) from Saccharomyces cerevisiae (strain ATCC 204508 / S288c) (Baker's yeast).